The following is a 194-amino-acid chain: Flagellar transcriptional regulator FlhC (194 aa).

Residues cysteine 139, cysteine 142, cysteine 159, and cysteine 162 each coordinate Zn(2+).

The protein belongs to the FlhC family. Heterohexamer composed of two FlhC and four FlhD subunits. Each FlhC binds a FlhD dimer, forming a heterotrimer, and a hexamer assembles by dimerization of two heterotrimers. Zn(2+) serves as cofactor.

It is found in the cytoplasm. Its function is as follows. Functions in complex with FlhD as a master transcriptional regulator that regulates transcription of several flagellar and non-flagellar operons by binding to their promoter region. Activates expression of class 2 flagellar genes, including fliA, which is a flagellum-specific sigma factor that turns on the class 3 genes. Also regulates genes whose products function in a variety of physiological pathways. In Xenorhabdus nematophila (Achromobacter nematophilus), this protein is Flagellar transcriptional regulator FlhC.